The following is a 293-amino-acid chain: Ribosomal protein L11 methyltransferase (293 aa).

S-adenosyl-L-methionine is bound by residues Thr144, Gly165, Asp187, and Asn228.

Belongs to the methyltransferase superfamily. PrmA family.

It is found in the cytoplasm. The enzyme catalyses L-lysyl-[protein] + 3 S-adenosyl-L-methionine = N(6),N(6),N(6)-trimethyl-L-lysyl-[protein] + 3 S-adenosyl-L-homocysteine + 3 H(+). In terms of biological role, methylates ribosomal protein L11. This chain is Ribosomal protein L11 methyltransferase, found in Methylococcus capsulatus (strain ATCC 33009 / NCIMB 11132 / Bath).